An 865-amino-acid chain; its full sequence is AP-1 complex subunit gamma-1 (865 aa).

Residues 665–690 (AEPLETPVDEMTQSPQSSLSRAPSTS) are disordered. Residues 675-690 (MTQSPQSSLSRAPSTS) show a composition bias toward polar residues. The GAE domain maps to 746–860 (KSYPPIVVFD…LDQVDFGKLP (115 aa)).

The protein belongs to the adaptor complexes large subunit family. Adaptor protein complex 1 (AP-1) is a heterotetramer composed of two large adaptins (gamma-type subunit apl4 and beta-type subunit apl2), a medium adaptin (mu-type subunit apm1) and a small adaptin (sigma-type subunit aps1). AP-1 interacts with clathrin.

Its subcellular location is the cytoplasmic vesicle. It localises to the clathrin-coated vesicle membrane. The protein localises to the golgi apparatus. Its function is as follows. Adaptins are components of the adaptor complexes which link clathrin to receptors in coated vesicles. Clathrin-associated protein complexes are believed to interact with the cytoplasmic tails of membrane proteins, leading to their selection and concentration. The AP-1 complex interacts directly with clathrin. This chain is AP-1 complex subunit gamma-1 (apl4), found in Schizosaccharomyces pombe (strain 972 / ATCC 24843) (Fission yeast).